The sequence spans 243 residues: MPDGIVASEAKDNTNNNLVHSFLGPKFPAASESSIMWFILRCLEWTLAKLLYRRRGYDHDLFYKGLAFGKYPNPTFTVTSPDCGPTGAKLGVEYSQWGSGKVPQLTWPVSGIEVKEYLIISEDPDAPLGHSNVHGIYCFVPGNKTGFGPDDLELLGEDKNGLKQISSGYLVGKNRRNTVYIAPRPPLGHGPHRYFFEIVALSQPLDPEKLSPVPTKQELSDMIIGKVCGWGLWTATFEQKWSM.

This sequence belongs to the tstB family.

Its function is as follows. Phosphatidylethanolamine-binding protein; part of the gene cluster that mediates the biosynthesis of the antihypercholesterolemic agents phomoidrides which are dimeric anhydrides. Within the pathway, tstB is not essential for dimerization and its function has still to be determined. The pathway begins with the highly reducing polyketide synthase tstA that catalyzes the formation of a C12-fatty acyl-ACP, starting from one acetate and 5 malonate units. The hydrolase tstM is involved in the release of the C12-fatty acyl chain from phiA. The alkylcitrate synthase (ACS) tstJ and the alkylcitrate dehydratase (ACDH) tstI then give rise to decarboxylated monomeric anhydrides by coupling the C12-fatty acyl chain with oxalacetic acid. The cyclase tstC is responsible for the dimerization of the monomeric anhydrides which leads to the production of prephomoidride that contains the characteristic bicyclo[4.3.1]deca-1,6-diene system of phomoidrides. Iterative oxidation catalyzed by the alpha-ketoglutarate-dependent dioxygenase tstK produced then phomoidride A. Finally, the methyltransferase tstE converts phomoidride A to phomoidride B via an acetalization reaction. The phosphatidylethanolamine-binding protein tstB and tstN are not essential for dimerization and their functions have still to be determined. This is Phomoidride biosynthesis cluster protein B from Talaromyces stipitatus (strain ATCC 10500 / CBS 375.48 / QM 6759 / NRRL 1006) (Penicillium stipitatum).